Consider the following 427-residue polypeptide: MTEAMKITLSTQPADARWGDKATYSINNDGITLHLNGKDDLGLIQRAARKIDGLGIKQVALTGEGWDIERCWAFWAGYKGPKGVRTVMWPDLDDAQRQELDNRLTIIDWVRDTINAPAEELGPEQLAQRAVDLLCSVACDSVTYRITKGEDLREQNYMGLHTVGRGSERPPVLLALDYNPTGDKDAPVYACLVGKGITFDSGGYSIKQSAFMDSMKSDMGGAATVTGALAFAITRGLNKRVKLFLCCADNLISGNAFKLGDIIRYRNGKNVEVMNTDAEGRLVLADGLIDASAQHPELIIDMATLTGAAKTALGNDYHALFSFDDTLAGRLLTSAAQENEPFWRLPLAEFHRNQLPSNFAELNNTGSAAYPAGASTAAGFLSHFVENYREGWLHIDCSATYRKAPVEQWAAGATGLGVRTIANLLTA.

Mn(2+)-binding residues include lysine 195 and aspartate 200. The active site involves lysine 207. The Mn(2+) site is built by aspartate 218, aspartate 277, and glutamate 279. Arginine 281 is a catalytic residue.

Belongs to the peptidase M17 family. In terms of assembly, homohexamer. The cofactor is Mn(2+).

It localises to the cytoplasm. It carries out the reaction Release of an N-terminal amino acid, Xaa, from a peptide or arylamide. Xaa is preferably Glu or Asp but may be other amino acids, including Leu, Met, His, Cys and Gln.. In terms of biological role, probably plays an important role in intracellular peptide degradation. This chain is Peptidase B, found in Salmonella dublin (strain CT_02021853).